The following is a 292-amino-acid chain: uncharacterized protein (292 aa).

Residues 13–35 (LFILFIIVVCIYLLPRVAINAFY) form a helical membrane-spanning segment.

This sequence belongs to the serine esterase family.

It localises to the membrane. This is an uncharacterized protein from Salmonella typhimurium (strain LT2 / SGSC1412 / ATCC 700720).